The chain runs to 422 residues: SH2 domain-containing protein 4A (422 aa).

Residues Ser-117 and Ser-123 each carry the phosphoserine modification. Disordered stretches follow at residues 141-190 (PQNV…EDEK) and 202-282 (SEWQ…VIRT). Basic and acidic residues-rich tracts occupy residues 163-190 (TKKD…EDEK) and 212-231 (KAAD…DYKR). The residue at position 233 (Ser-233) is a Phosphoserine. The 93-residue stretch at 316 to 408 (WFHGILTLKK…LGKELLLFPC (93 aa)) folds into the SH2 domain.

As to quaternary structure, interacts with ESR1.

It localises to the cytoplasm. Functionally, inhibits estrogen-induced cell proliferation by competing with PLCG for binding to ESR1, blocking the effect of estrogen on PLCG and repressing estrogen-induced proliferation. May play a role in T-cell development and function. This chain is SH2 domain-containing protein 4A (Sh2d4a), found in Rattus norvegicus (Rat).